Reading from the N-terminus, the 575-residue chain is DNA-directed RNA polymerase subunit beta' (575 aa).

Positions 64, 66, 85, and 88 each coordinate Zn(2+). The Mg(2+) site is built by aspartate 440, aspartate 442, and aspartate 444.

It belongs to the RNA polymerase beta' chain family. RpoC1 subfamily. In terms of assembly, in plastids the minimal PEP RNA polymerase catalytic core is composed of four subunits: alpha, beta, beta', and beta''. When a (nuclear-encoded) sigma factor is associated with the core the holoenzyme is formed, which can initiate transcription. It depends on Mg(2+) as a cofactor. Requires Zn(2+) as cofactor.

Its subcellular location is the plastid. The enzyme catalyses RNA(n) + a ribonucleoside 5'-triphosphate = RNA(n+1) + diphosphate. In terms of biological role, DNA-dependent RNA polymerase catalyzes the transcription of DNA into RNA using the four ribonucleoside triphosphates as substrates. In Euglena longa (Euglenophycean alga), this protein is DNA-directed RNA polymerase subunit beta'.